Consider the following 385-residue polypeptide: Cytochrome b (385 aa).

The next 4 helical transmembrane spans lie at 32–52 (FGSLLGLCLGIQIVTGVTLAM), 76–98 (WLVRYLHSNTASAFFFLVYLHIG), 113–133 (TWAIGTVILIVMMATAFLGYV), and 179–199 (FFALHFLLPFVLAALVIMHLI). Positions 82 and 96 each coordinate heme b. His-183 and His-197 together coordinate heme b. His-202 contacts a ubiquinone. 4 consecutive transmembrane segments (helical) span residues 226–246 (FVFKDLVTIFIFFIVLSIFVF), 290–310 (LLGVIAMFAAILALMVMPITD), 322–342 (LSKVAFYVFVANFLILMQIGA), and 349–369 (FIEFGQISTVLYFAHFFVIVP).

The protein belongs to the cytochrome b family. In terms of assembly, fungal cytochrome b-c1 complex contains 10 subunits; 3 respiratory subunits, 2 core proteins and 5 low-molecular weight proteins. Cytochrome b-c1 complex is a homodimer. Heme b is required as a cofactor.

Its subcellular location is the mitochondrion inner membrane. Component of the ubiquinol-cytochrome c reductase complex (complex III or cytochrome b-c1 complex) that is part of the mitochondrial respiratory chain. The b-c1 complex mediates electron transfer from ubiquinol to cytochrome c. Contributes to the generation of a proton gradient across the mitochondrial membrane that is then used for ATP synthesis. This is Cytochrome b (cob) from Aspergillus terreus (strain NIH 2624 / FGSC A1156).